A 140-amino-acid polypeptide reads, in one-letter code: Large ribosomal subunit protein uL14 (140 aa).

This sequence belongs to the universal ribosomal protein uL14 family. Part of the 50S ribosomal subunit. Forms a cluster with proteins L3 and L24e, part of which may contact the 16S rRNA in 2 intersubunit bridges.

In terms of biological role, binds to 23S rRNA. Forms part of two intersubunit bridges in the 70S ribosome. This Aeropyrum pernix (strain ATCC 700893 / DSM 11879 / JCM 9820 / NBRC 100138 / K1) protein is Large ribosomal subunit protein uL14.